The sequence spans 440 residues: NK1 transcription factor-related protein 1 (440 aa).

Over residues 1–13 (MSTSGPAAPGDVP) the composition is skewed to low complexity. 3 disordered regions span residues 1–82 (MSTS…RPTS), 145–291 (GVAA…PRRA), and 342–387 (KWKK…PMGA). The segment covering 14–31 (ALPPPPPGPGSGPAPPAP) has biased composition (pro residues). Composition is skewed to low complexity over residues 62–74 (VPAVPEGAGAARP) and 145–158 (GVAAAAGAEPTSAG). The segment covering 170–181 (GYSSGSGRSPTA) has biased composition (polar residues). Over residues 182–198 (DSEDEAPEDEDEEEAPE) the composition is skewed to acidic residues. The segment covering 210–222 (GGSGGLGARGSGC) has biased composition (gly residues). The segment covering 237–269 (AAPGPRGNSPGAPGPPATATGAGSAGSTPQGAA) has biased composition (low complexity). The homeobox DNA-binding region spans 288–347 (PRRARTAFTYEQLVALENKFKATRYLSVCERLNLALSLSLTETQVKIWFQNRRTKWKKQN). Over residues 356–374 (TGGGGGPGPGAGPGAGLPG) the composition is skewed to gly residues.

The protein belongs to the NK-1 homeobox family.

It localises to the nucleus. Its function is as follows. May be required for the coordinated crosstalk of factors involved in the maintenance of energy homeostasis, possibly by regulating the transcription of specific factors involved in energy balance. The sequence is that of NK1 transcription factor-related protein 1 from Mus musculus (Mouse).